The chain runs to 162 residues: Inner membrane protein YbjO (162 aa).

At 1-23 (MEDETLGFFKKTSSSHARLNVPA) the chain is on the periplasmic side. The helical transmembrane segment at 24 to 44 (LVQVAALAIIMIRGLDVLMIF) threads the bilayer. Residues 45-66 (NTLGVRGIGEFIHRSVQTWSLT) are Cytoplasmic-facing. Residues 67-87 (LVFLSSLVLVFIEIWCAFSLV) traverse the membrane as a helical segment. At 88–94 (KGRRWAR) the chain is on the periplasmic side. Residues 95–115 (WLYLLTQITAASYLWAASLGY) traverse the membrane as a helical segment. Topologically, residues 116 to 162 (GYPELFSIPGESKREIFHSLMLQKLPDMLILMLLFVPSTSRRFFQLQ) are cytoplasmic.

It is found in the cell inner membrane. The chain is Inner membrane protein YbjO (ybjO) from Escherichia coli O157:H7.